Here is a 956-residue protein sequence, read N- to C-terminus: Kinesin heavy chain isoform 5C (956 aa).

A Kinesin motor domain is found at 8–327 (SIKVMCRFRP…LMFGQRAKTI (320 aa)). ATP contacts are provided by Q87, S89, S90, G91, K92, T93, H94, and K99. The microtubule-binding stretch occupies residues 174–315 (VSSPEEVMDV…PSVFNEAETK (142 aa)). T403 carries the post-translational modification Phosphothreonine. Positions 406–923 (VDGISAEKEK…RRAHSAQIAK (518 aa)) form a coiled coil. The interval 859–956 (CELPKLEKRL…GSSNSTHYQK (98 aa)) is globular. A disordered region spans residues 910 to 956 (KNMARRAHSAQIAKPIRPGHYPASSPTAVHAVRGGGGGSSNSTHYQK).

It belongs to the TRAFAC class myosin-kinesin ATPase superfamily. Kinesin family. Kinesin subfamily. Oligomer composed of two heavy chains and two light chains. Interacts with GRIP1. Interacts with KLC3 and TRAK1. Interacts with ZFYVE27.

The protein localises to the cytoplasm. Its subcellular location is the cytoskeleton. The protein resides in the cell projection. It is found in the dendrite. The catalysed reaction is ATP + H2O = ADP + phosphate + H(+). In terms of biological role, microtubule-associated force-producing protein that may play a role in organelle transport. Has ATPase activity. Involved in synaptic transmission. Mediates dendritic trafficking of mRNAs. Required for anterograde axonal transportation of MAPK8IP3/JIP3 which is essential for MAPK8IP3/JIP3 function in axon elongation. The protein is Kinesin heavy chain isoform 5C (Kif5c) of Mus musculus (Mouse).